An 88-amino-acid polypeptide reads, in one-letter code: Small ribosomal subunit protein uS17 (88 aa).

It belongs to the universal ribosomal protein uS17 family. As to quaternary structure, part of the 30S ribosomal subunit.

In terms of biological role, one of the primary rRNA binding proteins, it binds specifically to the 5'-end of 16S ribosomal RNA. The polypeptide is Small ribosomal subunit protein uS17 (Mycoplasmopsis agalactiae (strain NCTC 10123 / CIP 59.7 / PG2) (Mycoplasma agalactiae)).